The primary structure comprises 132 residues: Replication enhancer protein (132 aa).

The protein belongs to the geminiviridae replication enhancer protein family. Homooligomer. Interacts with the replication-associated protein (REP). Interacts with host proliferating cell nuclear antigen (PCNA). Interacts with host retinoblastoma-related protein 1 (RBR1), and may thereby deregulate the host cell cycle. Oligomerization and interaction with PCNA are necessary for optimal replication enhancement.

Functionally, increases viral DNA accumulation. Enhances infectivity and symptom expression. The protein is Replication enhancer protein of Potato yellow mosaic virus (isolate Venezuela) (PYMV).